We begin with the raw amino-acid sequence, 239 residues long: Ribosomal RNA small subunit methyltransferase G (239 aa).

S-adenosyl-L-methionine-binding positions include G75, L80, 126 to 127 (AE), and R142.

It belongs to the methyltransferase superfamily. RNA methyltransferase RsmG family.

The protein localises to the cytoplasm. In terms of biological role, specifically methylates the N7 position of guanine in position 518 of 16S rRNA. This Streptomyces coelicolor (strain ATCC BAA-471 / A3(2) / M145) protein is Ribosomal RNA small subunit methyltransferase G.